The primary structure comprises 329 residues: Diaminopimelate epimerase (329 aa).

2 residues coordinate substrate: Asn14 and Asn73. The active-site Proton donor is Cys82. Substrate-binding positions include 83–84 (GN), Asn170, Asn206, and 224–225 (ER). Cys233 functions as the Proton acceptor in the catalytic mechanism. 234–235 (GT) provides a ligand contact to substrate.

It belongs to the diaminopimelate epimerase family. Homodimer.

The protein resides in the cytoplasm. The catalysed reaction is (2S,6S)-2,6-diaminopimelate = meso-2,6-diaminopimelate. It participates in amino-acid biosynthesis; L-lysine biosynthesis via DAP pathway; DL-2,6-diaminopimelate from LL-2,6-diaminopimelate: step 1/1. Catalyzes the stereoinversion of LL-2,6-diaminopimelate (L,L-DAP) to meso-diaminopimelate (meso-DAP), a precursor of L-lysine and an essential component of the bacterial peptidoglycan. This Listeria monocytogenes serotype 4b (strain CLIP80459) protein is Diaminopimelate epimerase.